Here is a 606-residue protein sequence, read N- to C-terminus: Gamma-aminobutyric acid receptor subunit beta (606 aa).

An N-terminal signal peptide occupies residues 1 to 44 (MSDSKMDKLARMAPLPRTPLLTIWLAINMALIAQETGHKRIHTV). The Extracellular portion of the chain corresponds to 45–268 (QAATGGGSML…CEIQFVRSMG (224 aa)). Residue N58 is glycosylated (N-linked (GlcNAc...) asparagine). Residues C185 and C199 are joined by a disulfide bond. N-linked (GlcNAc...) asparagine glycosylation occurs at N253. Helical transmembrane passes span 269–291 (YYLI…SFWL), 297–316 (PARV…LMSS), and 333–356 (YLGT…YMAK). Residues 357–568 (RIQMRKQRFM…LGITPSDIDK (212 aa)) are Cytoplasmic-facing. Disordered regions lie at residues 376 to 451 (KQQL…VSNR) and 482 to 542 (HDPK…AAVP). A compositionally biased stretch (low complexity) spans 381-395 (GANQQQANPNPNANV). Residues 396–425 (GGPGGVGVGPGGPGGPGGGVNVGVGMGMGP) are compositionally biased toward gly residues. Residues 430–443 (GHGHHAHSHGHPHA) show a composition bias toward basic residues. The span at 499–536 (GGRGGPQSHGPGPGQGGGPPGGGGGGGGGGGPPEGGGD) shows a compositional bias: gly residues. Residues 569–590 (YSRIVFPVCFVCFNLMYWIIYL) traverse the membrane as a helical segment.

This sequence belongs to the ligand-gated ion channel (TC 1.A.9) family. Gamma-aminobutyric acid receptor (TC 1.A.9.5) subfamily. As to quaternary structure, forms oligomers. Interacts with Nlg4; the interaction mediates Rdl clustering. Interacts with Fbxl4; the interaction mediates Rdl degradation. Expressed in different parts of the brain: the mushroom bodies (alpha, alpha', beta, beta', gamma lobes and peduncles), the neurons projecting to the columnar-type neuron LC9 optic glomerulus, in interneurons connecting the paired olfactory lobes, antennal lobes, PDF-expressing small and large ventral lateral neurons (LNvs) of the circadian clock and lobula columnar neuron 11 (LC11) (at protein level). Expressed in all major ON pathway medulla neurons (Mi1, Tm3, Mi4, and Mi9) and in OFF pathway neurons (Tm1, Tm2, Tm4, and Tm9).

Its subcellular location is the cell membrane. It localises to the postsynaptic cell membrane. The protein localises to the cell projection. The protein resides in the dendrite. It is found in the axon. Activated by agonist muscimol. Insensitive to zinc, glycine, glutamate, and baclofen, loreclezole, to antagonist bicuculline, glycine-receptor antagonist strychnine, and nonselective GABA and glycine antagonist RU 5135. Insensitive to flunitrazepam, pentobarbitone or pregnane steroids such as 5alpha-pregnan-3alpha-ol-20-one. Inhibited by insecticides picrotoxin (PTX), cyclodiene dieldrin, TBPS and lindane. Inhibited by ivermectin, fipronil and pyrafluprole. Its activity is regulated as follows. Inhibited by insecticides picrotoxin (PTX). In terms of biological role, gamma-aminobutyric acid (GABA) receptor voltage channel subunit. GABA, an inhibitory neurotransmitter, mediates neuronal inhibition by binding to the GABA receptor and opening an integral chloride channel. Together with glutamate receptor GluClalpha, plays an important role in the visual response by regulating the activity of ON/OFF-selective neurons. Plays a role in promoting sleep and sleep latency by regulating the activity of peptidergic PDF neurons. In large ventral lateral clock neurons, clustering is mediated by Nlg4 and protein levels undergo daily degradation in response to the circadian clock. In neurons in the mushroom bodies, has a role in odor memory acquisition where it inhibits appetitive and aversive olfactory learning, probably upstream of Adcy1/adenylate cyclase 1 and GTPase activating protein Nf1. In male-specific GABAergic neurons, plays a role in inhibiting male aggressive behavior during courtship. Functionally, gamma-aminobutyric acid (GABA) receptor voltage channel subunit. In Drosophila melanogaster (Fruit fly), this protein is Gamma-aminobutyric acid receptor subunit beta (Rdl).